The sequence spans 87 residues: Toxin Cll3 (87 aa).

An N-terminal signal peptide occupies residues 1–19; sequence MNSLLMITACLAVIGTVWA. The LCN-type CS-alpha/beta domain occupies 20–85; that stretch reads KEGYIVNYYD…VWPLPNKTCY (66 aa). 4 disulfide bridges follow: C31–C84, C35–C60, C44–C65, and C48–C67. At Y85 the chain carries Tyrosine amide.

This sequence belongs to the long (4 C-C) scorpion toxin superfamily. Sodium channel inhibitor family. Beta subfamily. In terms of tissue distribution, expressed by the venom gland.

The protein resides in the secreted. Its function is as follows. Beta toxins bind voltage-independently at site-4 of sodium channels (Nav) and shift the voltage of activation toward more negative potentials thereby affecting sodium channel activation and promoting spontaneous and repetitive firing. The chain is Toxin Cll3 from Centruroides limpidus (Mexican scorpion).